A 683-amino-acid chain; its full sequence is PTS system mannose-specific EIIBCA component (683 aa).

The PTS EIIB type-1 domain maps to 1–89 (MASKLTTTSQ…LKLDGMKHFA (89 aa)). C28 functions as the Phosphocysteine intermediate; for EIIB activity in the catalytic mechanism. Residues 117–476 (EFLSDTFRPI…NEERDEARAK (360 aa)) form the PTS EIIC type-1 domain. 10 helical membrane-spanning segments follow: residues 126–146 (ILWA…ADTF), 162–182 (YVFL…MVGA), 193–213 (WIGA…LGSA), 225–245 (VLND…GLYW), 260–280 (MVFV…FLLG), 303–323 (FILS…GLHW), 344–364 (PMGA…LLSI), 376–396 (LGGM…YGVL), 409–429 (GCLA…AFVF), and 442–462 (LGYT…VLAL). Residues 550–654 (DPIFAAGKLG…PLITPVVVSN (105 aa)) form the PTS EIIA type-1 domain. The Tele-phosphohistidine intermediate; for EIIA activity role is filled by H602.

Its subcellular location is the cell membrane. It carries out the reaction D-mannose(out) + N(pros)-phospho-L-histidyl-[protein] = D-mannose 6-phosphate(in) + L-histidyl-[protein]. In terms of biological role, the phosphoenolpyruvate-dependent sugar phosphotransferase system (sugar PTS), a major carbohydrate active -transport system, catalyzes the phosphorylation of incoming sugar substrates concomitantly with their translocation across the cell membrane. This system is involved in mannose transport. The sequence is that of PTS system mannose-specific EIIBCA component (ptsM) from Corynebacterium glutamicum (strain ATCC 13032 / DSM 20300 / JCM 1318 / BCRC 11384 / CCUG 27702 / LMG 3730 / NBRC 12168 / NCIMB 10025 / NRRL B-2784 / 534).